The sequence spans 361 residues: Allatostatin-A receptor (361 aa).

At Met-1–Pro-46 the chain is on the extracellular side. Residues Asn-14 and Asn-26 are each glycosylated (N-linked (GlcNAc...) asparagine). The helical transmembrane segment at Ile-47 to Val-67 threads the bilayer. The Cytoplasmic portion of the chain corresponds to Ala-68–Asn-78. Residues Leu-79–Thr-99 form a helical membrane-spanning segment. At Ala-100–Lys-116 the chain is on the extracellular side. A disulfide bridge links Cys-115 with Cys-196. Residues Val-117–Ser-137 traverse the membrane as a helical segment. The Cytoplasmic segment spans residues Leu-138 to Asn-158. Residues Ala-159–Ile-179 traverse the membrane as a helical segment. Residues Cys-180 to Ser-212 are Extracellular-facing. The N-linked (GlcNAc...) asparagine glycan is linked to Asn-192. The chain crosses the membrane as a helical span at residues Phe-213–Leu-233. The Cytoplasmic segment spans residues Thr-234–Met-259. A helical transmembrane segment spans residues Val-260 to Val-280. The Extracellular portion of the chain corresponds to Lys-281 to Gln-296. The helical transmembrane segment at Ile-297–Leu-317 threads the bilayer. At Ser-318–Val-361 the chain is on the cytoplasmic side. A disordered region spans residues Gly-341–Val-361. Over residues Pro-343–Val-361 the composition is skewed to polar residues.

This sequence belongs to the G-protein coupled receptor 1 family. Expressed in the midgut and, to a lesser extent, in the fore- and hindgut of fifth instar larvae. Also highly expressed in the brain of fourth and fifth instar larvae.

Its subcellular location is the cell membrane. Acts as a receptor for A-type allatostatin neuropeptide hormones. In Bombyx mori (Silk moth), this protein is Allatostatin-A receptor.